A 476-amino-acid chain; its full sequence is Nodulation protein NoeA (476 aa).

Not known; does not seem to participate in nod factor synthesis but required for nodulation on some specific Medicago species such as M.littoralis. In Rhizobium meliloti (strain 1021) (Ensifer meliloti), this protein is Nodulation protein NoeA (noeA).